The following is a 103-amino-acid chain: Small ribosomal subunit protein uS10 (103 aa).

This sequence belongs to the universal ribosomal protein uS10 family. In terms of assembly, part of the 30S ribosomal subunit.

Functionally, involved in the binding of tRNA to the ribosomes. This is Small ribosomal subunit protein uS10 from Shewanella loihica (strain ATCC BAA-1088 / PV-4).